The sequence spans 577 residues: Arginine--tRNA ligase (577 aa).

Positions 122–132 (PNVAKEMHVGH) match the 'HIGH' region motif.

The protein belongs to the class-I aminoacyl-tRNA synthetase family. As to quaternary structure, monomer.

It localises to the cytoplasm. The catalysed reaction is tRNA(Arg) + L-arginine + ATP = L-arginyl-tRNA(Arg) + AMP + diphosphate. The protein is Arginine--tRNA ligase of Vibrio vulnificus (strain CMCP6).